A 153-amino-acid polypeptide reads, in one-letter code: 6,7-dimethyl-8-ribityllumazine synthase (153 aa).

Residues phenylalanine 21, 55 to 57 (AFE), and 79 to 81 (TVI) each bind 5-amino-6-(D-ribitylamino)uracil. 84 to 85 (AT) is a binding site for (2S)-2-hydroxy-3-oxobutyl phosphate. Histidine 87 acts as the Proton donor in catalysis. Residue phenylalanine 112 coordinates 5-amino-6-(D-ribitylamino)uracil. Residue arginine 126 participates in (2S)-2-hydroxy-3-oxobutyl phosphate binding.

The protein belongs to the DMRL synthase family. In terms of assembly, forms an icosahedral capsid composed of 60 subunits, arranged as a dodecamer of pentamers.

It carries out the reaction (2S)-2-hydroxy-3-oxobutyl phosphate + 5-amino-6-(D-ribitylamino)uracil = 6,7-dimethyl-8-(1-D-ribityl)lumazine + phosphate + 2 H2O + H(+). Its pathway is cofactor biosynthesis; riboflavin biosynthesis; riboflavin from 2-hydroxy-3-oxobutyl phosphate and 5-amino-6-(D-ribitylamino)uracil: step 1/2. Its function is as follows. Catalyzes the formation of 6,7-dimethyl-8-ribityllumazine by condensation of 5-amino-6-(D-ribitylamino)uracil with 3,4-dihydroxy-2-butanone 4-phosphate. This is the penultimate step in the biosynthesis of riboflavin. This Bacillus cereus (strain G9842) protein is 6,7-dimethyl-8-ribityllumazine synthase.